Consider the following 680-residue polypeptide: Potassium-transporting ATPase ATP-binding subunit (680 aa).

A run of 4 helical transmembrane segments spans residues valine 37–alanine 57, isoleucine 69–glycine 89, isoleucine 223–alanine 243, and alanine 257–alanine 277. Aspartate 307 functions as the 4-aspartylphosphate intermediate in the catalytic mechanism. Residues aspartate 344, glutamate 348, phenylalanine 375–serine 382, and lysine 393 each bind ATP. Mg(2+)-binding residues include aspartate 516 and aspartate 520. The next 3 helical transmembrane spans lie at phenylalanine 586–methionine 606, alanine 614–leucine 634, and leucine 652–leucine 672.

It belongs to the cation transport ATPase (P-type) (TC 3.A.3) family. Type IA subfamily. The system is composed of three essential subunits: KdpA, KdpB and KdpC.

It localises to the cell inner membrane. The catalysed reaction is K(+)(out) + ATP + H2O = K(+)(in) + ADP + phosphate + H(+). In terms of biological role, part of the high-affinity ATP-driven potassium transport (or Kdp) system, which catalyzes the hydrolysis of ATP coupled with the electrogenic transport of potassium into the cytoplasm. This subunit is responsible for energy coupling to the transport system and for the release of the potassium ions to the cytoplasm. In Rhizobium meliloti (strain 1021) (Ensifer meliloti), this protein is Potassium-transporting ATPase ATP-binding subunit.